The chain runs to 570 residues: Dihydroxy-acid dehydratase (570 aa).

A [2Fe-2S] cluster-binding site is contributed by C61. D94 is a binding site for Mg(2+). Residue C135 coordinates [2Fe-2S] cluster. 2 residues coordinate Mg(2+): D136 and K137. K137 is modified (N6-carboxylysine). Residue C207 coordinates [2Fe-2S] cluster. Mg(2+) is bound at residue E459. S485 acts as the Proton acceptor in catalysis.

Belongs to the IlvD/Edd family. Homodimer. [2Fe-2S] cluster is required as a cofactor. Mg(2+) serves as cofactor.

It catalyses the reaction (2R)-2,3-dihydroxy-3-methylbutanoate = 3-methyl-2-oxobutanoate + H2O. It carries out the reaction (2R,3R)-2,3-dihydroxy-3-methylpentanoate = (S)-3-methyl-2-oxopentanoate + H2O. It functions in the pathway amino-acid biosynthesis; L-isoleucine biosynthesis; L-isoleucine from 2-oxobutanoate: step 3/4. It participates in amino-acid biosynthesis; L-valine biosynthesis; L-valine from pyruvate: step 3/4. In terms of biological role, functions in the biosynthesis of branched-chain amino acids. Catalyzes the dehydration of (2R,3R)-2,3-dihydroxy-3-methylpentanoate (2,3-dihydroxy-3-methylvalerate) into 2-oxo-3-methylpentanoate (2-oxo-3-methylvalerate) and of (2R)-2,3-dihydroxy-3-methylbutanoate (2,3-dihydroxyisovalerate) into 2-oxo-3-methylbutanoate (2-oxoisovalerate), the penultimate precursor to L-isoleucine and L-valine, respectively. The sequence is that of Dihydroxy-acid dehydratase from Lactococcus lactis subsp. cremoris (strain MG1363).